The primary structure comprises 324 residues: Phospho-N-acetylmuramoyl-pentapeptide-transferase (324 aa).

10 consecutive transmembrane segments (helical) span residues 9–29, 53–73, 77–97, 117–137, 147–167, 176–196, 201–221, 227–247, 253–273, and 304–324; these read TFAV…PFLV, TMGA…FSFI, VSAA…LGFL, FLGQ…NGFA, IEVD…VGFS, LDGL…VIAF, MDVA…LLFN, IFMG…ISIL, LLLL…LQVF, and VLTF…VVIF.

It belongs to the glycosyltransferase 4 family. MraY subfamily. Requires Mg(2+) as cofactor.

It is found in the cell membrane. It carries out the reaction UDP-N-acetyl-alpha-D-muramoyl-L-alanyl-gamma-D-glutamyl-meso-2,6-diaminopimeloyl-D-alanyl-D-alanine + di-trans,octa-cis-undecaprenyl phosphate = di-trans,octa-cis-undecaprenyl diphospho-N-acetyl-alpha-D-muramoyl-L-alanyl-D-glutamyl-meso-2,6-diaminopimeloyl-D-alanyl-D-alanine + UMP. It participates in cell wall biogenesis; peptidoglycan biosynthesis. Its function is as follows. Catalyzes the initial step of the lipid cycle reactions in the biosynthesis of the cell wall peptidoglycan: transfers peptidoglycan precursor phospho-MurNAc-pentapeptide from UDP-MurNAc-pentapeptide onto the lipid carrier undecaprenyl phosphate, yielding undecaprenyl-pyrophosphoryl-MurNAc-pentapeptide, known as lipid I. This Listeria monocytogenes serotype 4b (strain CLIP80459) protein is Phospho-N-acetylmuramoyl-pentapeptide-transferase.